A 1032-amino-acid polypeptide reads, in one-letter code: Reticulon-3 (1032 aa).

Over residues 1–24 (MAEPSAATQSHSISSSSFGAEPSA) the composition is skewed to low complexity. The disordered stretch occupies residues 1–61 (MAEPSAATQS…SSSSSQPVSL (61 aa)). Residue Ala-2 is modified to N-acetylalanine. Topologically, residues 2 to 863 (AEPSAATQSH…KKTGFVFGTT (862 aa)) are cytoplasmic. Ser-30 carries the post-translational modification Phosphoserine. Over residues 32–61 (GACPALGTKSCSSSCADSFVSSSSSQPVSL) the composition is skewed to low complexity. Residues Ser-229, Ser-243, Ser-246, Ser-283, Ser-316, and Ser-453 each carry the phosphoserine modification. Basic and acidic residues predominate over residues 545–568 (CEREEKTSKNFEELVSDSELHQDQ). Residues 545 to 617 (CEREEKTSKN…NPKLPSTVSP (73 aa)) form a disordered region. Positions 605-617 (TTENPKLPSTVSP) are enriched in polar residues. Residues Ser-649 and Ser-650 each carry the phosphoserine modification. Residues 696–715 (NESGGSEIKDIGSKYSEQSK) are compositionally biased toward basic and acidic residues. The segment at 696-726 (NESGGSEIKDIGSKYSEQSKETNGSEPLGVF) is disordered. Phosphoserine is present on Ser-735. A Reticulon domain is found at 844 to 1032 (VHDLIFWRDV…LPGIAKKKAE (189 aa)). The helical intramembrane region spans 864–887 (LIMLLSLAAFSVISVVSYLILALL). At 888–947 (SVTISFRIYKSVIQAVQKSEEGHPFKAYLDVDITLSSEAFHNYMNAAMVHINRALKLIIR) the chain is on the cytoplasmic side. Positions 948 to 968 (LFLVEDLVDSLKLAVFMWLMT) form an intramembrane region, helical. The Cytoplasmic portion of the chain corresponds to 969-972 (YVGA). The helical intramembrane region spans 973–993 (VFNGITLLILAELLIFSVPIV). Residues 987–1032 (IFSVPIVYEKYKTQIDHYVGIARDQTKSIVEKIQAKLPGIAKKKAE) are interaction with FADD. At 994–1032 (YEKYKTQIDHYVGIARDQTKSIVEKIQAKLPGIAKKKAE) the chain is on the cytoplasmic side. Residues 1000 to 1002 (QID) are interaction with BACE1.

In terms of assembly, homodimer. Interacts with ATL1. Interacts with RTN4. Isoform 3 interacts with BACE1, BACE2, BCL2 and FADD. Interacts with ATL2. Interacts with TMEM33. Interacts with ZFYVE27 and with KIF5A in a ZFYVE27-dependent manner. Interacts with RIGI. Interacts with TRIM25. (Microbial infection) Interacts with Coxsackievirus A16, enterovirus 71 and poliovirus P2C proteins. As to quaternary structure, (Microbial infection) Interacts with West Nile virus protein NS4A. In terms of tissue distribution, isoform 3 is widely expressed, with highest levels in brain, where it is enriched in neuronal cell bodies from gray matter (at protein level). Three times more abundant in macula than in peripheral retina. Isoform 1 is expressed at high levels in brain and at low levels in skeletal muscle. Isoform 2 is only found in melanoma.

The protein localises to the endoplasmic reticulum membrane. It is found in the golgi apparatus membrane. Its function is as follows. May be involved in membrane trafficking in the early secretory pathway. Inhibits BACE1 activity and amyloid precursor protein processing. May induce caspase-8 cascade and apoptosis. May favor BCL2 translocation to the mitochondria upon endoplasmic reticulum stress. Induces the formation of endoplasmic reticulum tubules. Also acts as an inflammation-resolving regulator by interacting with both TRIM25 and RIGI, subsequently impairing RIGI 'Lys-63'-linked polyubiquitination leading to IRF3 and NF-kappa-B inhibition. Functionally, (Microbial infection) Plays a positive role in viral replication and pathogenesis of enteroviruses. This is Reticulon-3 (RTN3) from Homo sapiens (Human).